Here is a 156-residue protein sequence, read N- to C-terminus: Endoribonuclease YbeY (156 aa).

3 residues coordinate Zn(2+): H117, H121, and H127.

This sequence belongs to the endoribonuclease YbeY family. Zn(2+) is required as a cofactor.

It is found in the cytoplasm. Single strand-specific metallo-endoribonuclease involved in late-stage 70S ribosome quality control and in maturation of the 3' terminus of the 16S rRNA. The protein is Endoribonuclease YbeY of Shewanella pealeana (strain ATCC 700345 / ANG-SQ1).